A 100-amino-acid chain; its full sequence is A-type ATP synthase subunit F (100 aa).

It belongs to the V-ATPase F subunit family. Has multiple subunits with at least A(3), B(3), C, D, E, F, H, I and proteolipid K(x).

Its subcellular location is the cell membrane. Component of the A-type ATP synthase that produces ATP from ADP in the presence of a proton gradient across the membrane. The sequence is that of A-type ATP synthase subunit F from Methanocorpusculum labreanum (strain ATCC 43576 / DSM 4855 / Z).